A 675-amino-acid chain; its full sequence is Dihydrolipoyllysine-residue acetyltransferase component of pyruvate dehydrogenase complex (675 aa).

One can recognise a Lipoyl-binding 1 domain in the interval 2–77 (AFSVEMPELG…DVGGVIAIIG (76 aa)). N6-lipoyllysine is present on lysine 43. The tract at residues 77–124 (GDADETPANEAPADEAPAPAEEEEPVKEEPKKEAAPEAPAATGAATDV) is disordered. 2 stretches are compositionally biased toward low complexity: residues 84-95 (ANEAPADEAPAP) and 112-124 (PEAP…ATDV). Residues 121–196 (ATDVEMPELG…DVGAVIARIG (76 aa)) enclose the Lipoyl-binding 2 domain. An N6-lipoyllysine modification is found at lysine 162. Residues 200-240 (AAAAPAEEEAAPAEEEEPVKEEPKKEAAPEAPAATGAATDV) form a disordered region. Acidic residues predominate over residues 205-218 (AEEEAAPAEEEEPV). Residues 237–312 (ATDVEMPELG…DVGAVIARIG (76 aa)) form the Lipoyl-binding 3 domain. The residue at position 278 (lysine 278) is an N6-lipoyllysine. Positions 316 to 368 (AAAAPAEEEAAPAEEEEPVKEEPKKEEPKKEEPKKEAATTPAAASATVSASGD) are disordered. Residues 321–334 (AEEEAAPAEEEEPV) are compositionally biased toward acidic residues. Positions 335–352 (KEEPKKEEPKKEEPKKEA) are enriched in basic and acidic residues. Positions 353-366 (ATTPAAASATVSAS) are enriched in low complexity. The region spanning 372 to 409 (YVTPLVRKLAEKHGVDLNTVTGTGIGGRIRKQDVLAAA) is the Peripheral subunit-binding (PSBD) domain. Active-site residues include histidine 645 and aspartate 649.

The protein belongs to the 2-oxoacid dehydrogenase family. Forms a 24-polypeptide structural core with octahedral symmetry. Part of an unusual ODH/PDH supercomplex, consisting of AceE (E1), AceF (E2), and Lpd (E3) together with OdhA (E1+E2). Requires (R)-lipoate as cofactor.

It carries out the reaction N(6)-[(R)-dihydrolipoyl]-L-lysyl-[protein] + acetyl-CoA = N(6)-[(R)-S(8)-acetyldihydrolipoyl]-L-lysyl-[protein] + CoA. Its function is as follows. Is essential for both 2-oxoglutarate dehydrogenase (ODH) and pyruvate dehydrogenase (PDH) activities, but AceF has exclusively transacetylase (and no transsuccinylase) activity. The lipoyl residues required for ODH activity are likely provided by AceF. This is Dihydrolipoyllysine-residue acetyltransferase component of pyruvate dehydrogenase complex (aceF) from Corynebacterium glutamicum (strain ATCC 13032 / DSM 20300 / JCM 1318 / BCRC 11384 / CCUG 27702 / LMG 3730 / NBRC 12168 / NCIMB 10025 / NRRL B-2784 / 534).